A 445-amino-acid chain; its full sequence is Histamine H3 receptor (445 aa).

At Met-1 to Ala-39 the chain is on the extracellular side. The N-linked (GlcNAc...) asparagine glycan is linked to Asn-11. A helical membrane pass occupies residues Leu-40–Val-60. Over Ala-61–Asn-70 the chain is Cytoplasmic. Residues Phe-71–Tyr-91 form a helical membrane-spanning segment. Residues Val-92 to Lys-108 lie on the Extracellular side of the membrane. A disulfide bond links Cys-107 and Cys-188. Residues Leu-109 to Ser-129 form a helical membrane-spanning segment. Residues Tyr-130–Met-156 lie on the Cytoplasmic side of the membrane. Residues Ala-157–Leu-177 traverse the membrane as a helical segment. Residues Ser-178–Trp-196 are Extracellular-facing. Residues Tyr-197–Phe-217 traverse the membrane as a helical segment. Residues Asn-218–Ser-359 are Cytoplasmic-facing. Disordered stretches follow at residues Asp-234–Trp-259 and Ala-286–Arg-336. The span at Pro-241–Pro-256 shows a compositional bias: pro residues. Over residues Ala-290–Ala-299 the composition is skewed to gly residues. The segment covering Ala-300–Arg-312 has biased composition (low complexity). A helical transmembrane segment spans residues Leu-360–Ile-380. Residues Arg-381–Thr-396 are Extracellular-facing. The helical transmembrane segment at Ser-397 to Tyr-417 threads the bilayer. Residues Ser-418–Lys-445 are Cytoplasmic-facing. Position 439 is a phosphoserine (Ser-439).

This sequence belongs to the G-protein coupled receptor 1 family. As to expression, expressed abundantly in brain, most notably throughout the thalamus, the ventromedial hypothalamus and the caudate nucleus. Isoform 1 is largely predominant in all tissues.

It localises to the cell membrane. Functionally, the H3 subclass of histamine receptors could mediate the histamine signals in CNS and peripheral nervous system. Signals through the inhibition of adenylate cyclase and displays high constitutive activity (spontaneous activity in the absence of agonist). This is Histamine H3 receptor (Hrh3) from Rattus norvegicus (Rat).